A 419-amino-acid chain; its full sequence is Metacaspase-1 (419 aa).

Residues 1–109 are disordered; that stretch reads MSGYPGYNNG…PPQGMHAFGQ (109 aa). Pro residues-rich tracts occupy residues 18-37 and 45-61; these read QYPPQPYYPPQPAYGAPPPQ and QPPPPQQPYGYSQPPPQ. Residues 83–95 are compositionally biased toward polar residues; that stretch reads SVNSNAYTNGNQN. Active-site residues include His210 and Cys266.

The protein belongs to the peptidase C14B family.

Its function is as follows. Involved in cell death (apoptosis). The protein is Metacaspase-1 (casA) of Botryotinia fuckeliana (strain B05.10) (Noble rot fungus).